The following is an 828-amino-acid chain: Isethionate sulfite-lyase (828 aa).

Residues glutamate 30–lysine 698 enclose the PFL domain. 2-hydroxyethane-1-sulfonate contacts are provided by residues arginine 187, glutamine 191, cysteine 466 to glutamate 468, and arginine 676. Cysteine 466 acts as the Cysteine radical intermediate in catalysis. Glutamate 468 (proton acceptor) is an active-site residue. A Glycine radical domain is found at aspartate 705–methionine 828. Glycine 803 is modified (glycine radical).

The protein belongs to the glycyl radical enzyme (GRE) family. As to quaternary structure, homodimer. In terms of processing, requires the activating protein IseH to generate the key active site glycyl radical on Gly-803 that is involved in catalysis.

The catalysed reaction is 2-hydroxyethane-1-sulfonate = acetaldehyde + sulfite + H(+). It functions in the pathway organosulfur degradation; alkanesulfonate degradation. Its function is as follows. Involved in an anaerobic respiration pathway that converts the sulfonate isethionate (2-hydroxyethanesulfonate) to ammonia, acetate and sulfide. Catalyzes the radical-mediated C-S bond cleavage of isethionate (2-hydroxyethanesulfonate) to form sulfite and acetaldehyde. Shows no activity with taurine or ethanolamine as substrates. The polypeptide is Isethionate sulfite-lyase (Nitratidesulfovibrio vulgaris (strain ATCC 29579 / DSM 644 / CCUG 34227 / NCIMB 8303 / VKM B-1760 / Hildenborough) (Desulfovibrio vulgaris)).